Consider the following 375-residue polypeptide: Methylthioribose-1-phosphate isomerase (375 aa).

Aspartate 259 serves as the catalytic Proton donor.

Belongs to the eIF-2B alpha/beta/delta subunits family. MtnA subfamily.

The protein resides in the cytoplasm. It is found in the nucleus. The enzyme catalyses 5-(methylsulfanyl)-alpha-D-ribose 1-phosphate = 5-(methylsulfanyl)-D-ribulose 1-phosphate. The protein operates within amino-acid biosynthesis; L-methionine biosynthesis via salvage pathway; L-methionine from S-methyl-5-thio-alpha-D-ribose 1-phosphate: step 1/6. Its function is as follows. Catalyzes the interconversion of methylthioribose-1-phosphate (MTR-1-P) into methylthioribulose-1-phosphate (MTRu-1-P). This chain is Methylthioribose-1-phosphate isomerase, found in Populus trichocarpa (Western balsam poplar).